The primary structure comprises 236 residues: MRFPSPLTEGRLVRRYKRFLADVELADGRVVTAHCANPGTMLGLIAPGRPVLLSASTNPARKLAWSWEMVQADLPGGPQWVGINTLRPNLLVAEAFREGRLPPLSGAATLRPEVRYGRASRVDFLAEGPAGPCHVEVKNCHMMREAGLAEFPDCVAARSARHMDELADVVRGGGRALLIVVVQMRAARFDVAGDIDPGFAAAFRRARAAGVETVAYACRLDPDEVTIDREIPIVTA.

Belongs to the SfsA family.

This chain is Sugar fermentation stimulation protein homolog, found in Methylobacterium nodulans (strain LMG 21967 / CNCM I-2342 / ORS 2060).